The primary structure comprises 432 residues: Anaerobic glycerol-3-phosphate dehydrogenase subunit B (432 aa).

The protein belongs to the anaerobic G-3-P dehydrogenase subunit B family. In terms of assembly, composed of a catalytic GlpA/B dimer and of membrane bound GlpC. FMN is required as a cofactor.

It carries out the reaction a quinone + sn-glycerol 3-phosphate = dihydroxyacetone phosphate + a quinol. It participates in polyol metabolism; glycerol degradation via glycerol kinase pathway; glycerone phosphate from sn-glycerol 3-phosphate (anaerobic route): step 1/1. Functionally, conversion of glycerol 3-phosphate to dihydroxyacetone. Uses fumarate or nitrate as electron acceptor. In Haemophilus influenzae (strain PittEE), this protein is Anaerobic glycerol-3-phosphate dehydrogenase subunit B.